The following is a 302-amino-acid chain: tRNA pseudouridine synthase B (302 aa).

Asp45 functions as the Nucleophile in the catalytic mechanism.

Belongs to the pseudouridine synthase TruB family. Type 1 subfamily.

The catalysed reaction is uridine(55) in tRNA = pseudouridine(55) in tRNA. Responsible for synthesis of pseudouridine from uracil-55 in the psi GC loop of transfer RNAs. This chain is tRNA pseudouridine synthase B, found in Francisella tularensis subsp. holarctica (strain FTNF002-00 / FTA).